Here is a 170-residue protein sequence, read N- to C-terminus: Extracellular globin-3 (170 aa).

The N-terminal stretch at 1–17 (MLRQLLVLVGLAVVCLA) is a signal peptide. Residues 23–169 (CCSEEDHRIV…ILTKISSRLN (147 aa)) form the Globin domain. A disulfide bridge connects residues Cys24 and Cys156. His119 contacts heme b.

This sequence belongs to the globin family. In terms of assembly, the extracellular hemoglobin of the earthworm consists of 12 subunits that have a hexagonal bilayer structure with a molecular weight near 3.8 million. Each one-twelfth subunit is composed primarily of disulfide linked trimers (chains A, B, and C) and monomers (chain D).

The protein resides in the secreted. This is Extracellular globin-3 from Lumbricus terrestris (Common earthworm).